We begin with the raw amino-acid sequence, 200 residues long: Large ribosomal subunit protein uL4 (200 aa).

The interval 44 to 70 is disordered; sequence AQKTRAEVTGSGKKPWRQKGTGRARSG.

Belongs to the universal ribosomal protein uL4 family. In terms of assembly, part of the 50S ribosomal subunit.

One of the primary rRNA binding proteins, this protein initially binds near the 5'-end of the 23S rRNA. It is important during the early stages of 50S assembly. It makes multiple contacts with different domains of the 23S rRNA in the assembled 50S subunit and ribosome. Its function is as follows. Protein L4 is a both a transcriptional repressor and a translational repressor protein. It regulates transcription of the S10 operon (to which L4 belongs) by causing premature termination of transcription within the S10 leader. L4 controls the translation of the S10 operon by binding to its mRNA. Functionally, this protein when expressed in E.coli represses both transcription and translation of the endogenous S10 operon. As the M.morganii S10 leader can be regulated in vitro by the E.coli L4 protein this strongly suggests the endogenous protein controls its own S10 operon in a similar fashion. In terms of biological role, forms part of the polypeptide exit tunnel. This Morganella morganii (Proteus morganii) protein is Large ribosomal subunit protein uL4 (rplD).